A 243-amino-acid chain; its full sequence is Adenosylcobinamide-GDP ribazoletransferase (243 aa).

A run of 7 helical transmembrane segments spans residues 8–28, 36–56, 58–78, 107–127, 131–151, 187–207, and 222–242; these read WLGAIAFYTCLPISPRWPIQL, PWVGLVLGGMLWGVQWLLDFL, VPSPVASAVLVALWLALTGGL, AGAFGVMAAMVILLLKVTSLS, KGSVLVWVLVLGRLAQVWAIA, FLLPLPLGQLLFGLLLILLIP, and YGAVVEWTEALLLVAFTVGSA.

The protein belongs to the CobS family. Mg(2+) is required as a cofactor.

It localises to the cell inner membrane. The enzyme catalyses alpha-ribazole + adenosylcob(III)inamide-GDP = adenosylcob(III)alamin + GMP + H(+). The catalysed reaction is alpha-ribazole 5'-phosphate + adenosylcob(III)inamide-GDP = adenosylcob(III)alamin 5'-phosphate + GMP + H(+). It functions in the pathway cofactor biosynthesis; adenosylcobalamin biosynthesis; adenosylcobalamin from cob(II)yrinate a,c-diamide: step 7/7. Its function is as follows. Joins adenosylcobinamide-GDP and alpha-ribazole to generate adenosylcobalamin (Ado-cobalamin). Also synthesizes adenosylcobalamin 5'-phosphate from adenosylcobinamide-GDP and alpha-ribazole 5'-phosphate. In Thermosynechococcus vestitus (strain NIES-2133 / IAM M-273 / BP-1), this protein is Adenosylcobinamide-GDP ribazoletransferase.